The chain runs to 239 residues: Probable transcriptional regulatory protein Sca_0317 (239 aa).

Belongs to the TACO1 family. YeeN subfamily.

It localises to the cytoplasm. The sequence is that of Probable transcriptional regulatory protein Sca_0317 from Staphylococcus carnosus (strain TM300).